A 499-amino-acid chain; its full sequence is Na(+)/H(+) antiporter NhaB (499 aa).

12 helical membrane passes run 38–58 (VSPFLAGWALIIEFIFTLAMA), 62–82 (YPLQPGGLLAIQAVLLGLTSA), 89–109 (VLANFKVILLLMFMVAGIYFM), 128–148 (LLLSLLFSFVAAVLSAFLDAL), 149–169 (TVTAVLIAVAVGFYAVYHRFA), 204–224 (LIMHGAVGTALGGVATLVGEP), 242–262 (LVMAPISVPALIGGLLTCAIL), 310–330 (VLVFALALHLAEVGLIGLLII), 349–369 (FEEALPFTALLVVFFAVVAVI), 393–413 (MFFVANGVLSMISDNVFVATV), 449–469 (ATPNGQAAFLFLLTSALAPLI), and 478–498 (IMALPYTIVLGAVGLGSVILF).

It belongs to the NhaB Na(+)/H(+) (TC 2.A.34) antiporter family.

It is found in the cell inner membrane. The catalysed reaction is 2 Na(+)(in) + 3 H(+)(out) = 2 Na(+)(out) + 3 H(+)(in). Na(+)/H(+) antiporter that extrudes sodium in exchange for external protons. The sequence is that of Na(+)/H(+) antiporter NhaB from Saccharophagus degradans (strain 2-40 / ATCC 43961 / DSM 17024).